Consider the following 845-residue polypeptide: Translation initiation factor IF-2 (845 aa).

Composition is skewed to basic and acidic residues over residues 139 to 198 (EAKR…EKPA) and 206 to 228 (FRSE…KELH). Residues 139-253 (EAKRQAAEEE…PQKAAPAAKH (115 aa)) form a disordered region. The tr-type G domain occupies 345–512 (SRAAVVTIMG…AILLQAEVME (168 aa)). Residues 354-361 (GHVDHGKT) form a G1 region. 354-361 (GHVDHGKT) contributes to the GTP binding site. Residues 379 to 383 (GITQH) are G2. A G3 region spans residues 400–403 (DTPG). GTP contacts are provided by residues 400-404 (DTPGH) and 454-457 (NKID). The segment at 454 to 457 (NKID) is G4. Residues 490 to 492 (SAK) form a G5 region.

Belongs to the TRAFAC class translation factor GTPase superfamily. Classic translation factor GTPase family. IF-2 subfamily.

Its subcellular location is the cytoplasm. One of the essential components for the initiation of protein synthesis. Protects formylmethionyl-tRNA from spontaneous hydrolysis and promotes its binding to the 30S ribosomal subunits. Also involved in the hydrolysis of GTP during the formation of the 70S ribosomal complex. The sequence is that of Translation initiation factor IF-2 from Nitrosococcus oceani (strain ATCC 19707 / BCRC 17464 / JCM 30415 / NCIMB 11848 / C-107).